A 448-amino-acid chain; its full sequence is Tubulin beta chain (448 aa).

Gln-11, Glu-69, Ser-138, Gly-142, Thr-143, Gly-144, Asn-204, and Asn-226 together coordinate GTP. Glu-69 serves as a coordination point for Mg(2+). The disordered stretch occupies residues Ser-429–Glu-448. Residues Asp-432–Glu-448 are compositionally biased toward acidic residues.

It belongs to the tubulin family. Dimer of alpha and beta chains. A typical microtubule is a hollow water-filled tube with an outer diameter of 25 nm and an inner diameter of 15 nM. Alpha-beta heterodimers associate head-to-tail to form protofilaments running lengthwise along the microtubule wall with the beta-tubulin subunit facing the microtubule plus end conferring a structural polarity. Microtubules usually have 13 protofilaments but different protofilament numbers can be found in some organisms and specialized cells. Mg(2+) serves as cofactor.

It localises to the cytoplasm. It is found in the cytoskeleton. Its function is as follows. Tubulin is the major constituent of microtubules, a cylinder consisting of laterally associated linear protofilaments composed of alpha- and beta-tubulin heterodimers. Microtubules grow by the addition of GTP-tubulin dimers to the microtubule end, where a stabilizing cap forms. Below the cap, tubulin dimers are in GDP-bound state, owing to GTPase activity of alpha-tubulin. This chain is Tubulin beta chain, found in Aspergillus fumigatus (strain ATCC MYA-4609 / CBS 101355 / FGSC A1100 / Af293) (Neosartorya fumigata).